A 477-amino-acid chain; its full sequence is Probable cytosolic Fe-S cluster assembly factor GL21135 (477 aa).

[4Fe-4S] cluster-binding residues include Cys23, Cys69, Cys72, Cys75, Cys188, Cys244, Cys396, and Cys400.

It belongs to the NARF family.

Functionally, component of the cytosolic iron-sulfur (Fe/S) protein assembly machinery. Required for maturation of extramitochondrial Fe/S proteins. The protein is Probable cytosolic Fe-S cluster assembly factor GL21135 of Drosophila persimilis (Fruit fly).